The sequence spans 77 residues: Dermatoxin-S1 (77 aa).

The signal sequence occupies residues 1–22 (MAFLKKSLFLILFLGLVPLSFC). The propeptide occupies 23–44 (ENDKREGENEEEQDDDQSEEKR). Residue glutamine 76 is modified to Glutamine amide.

As to expression, expressed by the skin glands.

Its subcellular location is the secreted. It is found in the target cell membrane. In terms of biological role, antimicrobial peptide with potent activity against Gram-positive bacteria B.megaterium, C.glutamicum and S.aureus and mollicutes A.laidlawii and S.melliferum. Less active against Gram-negative bacteria B.cepacia, P.aeruginosa, S.typhimurium and S.meliloti. Probably acts by disturbing membrane functions with its amphipathic structure. The protein is Dermatoxin-S1 of Phyllomedusa sauvagei (Sauvage's leaf frog).